Reading from the N-terminus, the 345-residue chain is MQLEIQVALNFIISYLYNKLPRRRVNIFGEELERLLKKKYEGHWYPEKPYKGSGFRCIHIGEKVDPVIEQASKESGLDIDDVRGNLPQDLSVWIDPFEVSYQIGEKGPVKVLYVDDNNENGCELDKEIKNSFNPEAQVFMPISDPASSVSSSPSPPFGHSAAVSPTFMPRSTQPLTFTTATFAATKFGSTKMKNSGRSNKVARTSPINLGLNVNDLLKQKAISSSMHSLYGLGLGSQQQPQQQQQPAQPPPPPPPPQQQQQQKTSALSPNAKEFIFPNMQGQGSSTNGMFPGDSPLNLSPLQYSNAFDVFAAYGGLNEKSFVDGLNFSLNNMQYSNQQFQPVMAN.

The short motif at 22–39 is the Bipartite nuclear localization signal element; the sequence is RRRVNIFGEELERLLKKK. Residues 82-92 form an important for nuclear localization region; that stretch reads VRGNLPQDLSV. A compositionally biased stretch (low complexity) spans 144 to 160; it reads DPASSVSSSPSPPFGHS. The disordered stretch occupies residues 144–171; it reads DPASSVSSSPSPPFGHSAAVSPTFMPRS. The interval 161–218 is required for interaction with CPEB3; the sequence is AAVSPTFMPRSTQPLTFTTATFAATKFGSTKMKNSGRSNKVARTSPINLGLNVNDLLK. Phosphothreonine is present on T204. The Nuclear export signal signature appears at 226–234; it reads MHSLYGLGL. The segment at 231-267 is disordered; sequence GLGLGSQQQPQQQQQPAQPPPPPPPPQQQQQQKTSAL. The span at 237 to 246 shows a compositional bias: low complexity; the sequence is QQQPQQQQQP. Residues 247–257 are compositionally biased toward pro residues; sequence AQPPPPPPPPQ.

It belongs to the BTG family. As to quaternary structure, interacts with ERBB2. Interacts with CNOT7. Interacts with CPEB3 (via C-terminal RNA-binding region); recruits CNOT7 to CPEB3 to form a ternary complex required for mRNA deadenylation and decay. Interacts with CNOT8. Interacts with CPEB4. Post-translationally, phosphorylated on Ser and Thr residues. Ubiquitous.

It localises to the cytoplasm. Its subcellular location is the nucleus. Functionally, anti-proliferative protein; the function is mediated by association with deadenylase subunits of the CCR4-NOT complex. Mediates CPEB3-accelerated mRNA deadenylation by binding to CPEB3 and recruiting CNOT7 which leads to target mRNA deadenylation and decay. This chain is Protein Tob1 (TOB1), found in Homo sapiens (Human).